Reading from the N-terminus, the 59-residue chain is Conotoxin mr5a (59 aa).

The signal sequence occupies residues 1-22 (MRCLPVFVILLLLIASAPSVDA). The propeptide occupies 23–48 (RPKTKDDMPLASFHDNAKRILQILQD).

Post-translationally, contains 2 disulfide bonds that can be either 'C1-C3, C2-C4' or 'C1-C4, C2-C3', since these disulfide connectivities have been observed for conotoxins with cysteine framework V (for examples, see AC P0DQQ7 and AC P81755). As to expression, expressed by the venom duct.

It localises to the secreted. This is Conotoxin mr5a from Conus marmoreus (Marble cone).